The sequence spans 455 residues: Cysteine--tRNA ligase (455 aa).

Cys-28 contributes to the Zn(2+) binding site. Residues 30–40 (MTVYDYCHLGH) carry the 'HIGH' region motif. Residues Cys-209, His-234, and Glu-238 each coordinate Zn(2+). The short motif at 266 to 270 (KMSKS) is the 'KMSKS' region element. ATP is bound at residue Lys-269.

Belongs to the class-I aminoacyl-tRNA synthetase family. Monomer. The cofactor is Zn(2+).

The protein resides in the cytoplasm. It catalyses the reaction tRNA(Cys) + L-cysteine + ATP = L-cysteinyl-tRNA(Cys) + AMP + diphosphate. The sequence is that of Cysteine--tRNA ligase from Methylobacillus flagellatus (strain ATCC 51484 / DSM 6875 / VKM B-1610 / KT).